The chain runs to 243 residues: Ribonuclease 3 (243 aa).

Positions 10–146 constitute an RNase III domain; sequence VNRFRKRFDT…FIGALYLDQG (137 aa). Position 59 (Glu-59) interacts with Mg(2+). The active site involves Asp-63. Residues Asp-132 and Glu-135 each contribute to the Mg(2+) site. Glu-135 is a catalytic residue. The 70-residue stretch at 172–241 folds into the DRBM domain; sequence DFKTQFQEYV…AESAYKQLKQ (70 aa). The span at 219-231 shows a compositional bias: basic and acidic residues; it reads GKGKTKKESEQRA. Residues 219-243 are disordered; it reads GKGKTKKESEQRAAESAYKQLKQIK.

Belongs to the ribonuclease III family. As to quaternary structure, homodimer. Requires Mg(2+) as cofactor.

It is found in the cytoplasm. The catalysed reaction is Endonucleolytic cleavage to 5'-phosphomonoester.. Its function is as follows. Digests double-stranded RNA. Involved in the processing of primary rRNA transcript to yield the immediate precursors to the large and small rRNAs (23S and 16S). Processes some mRNAs, and tRNAs when they are encoded in the rRNA operon. Processes pre-crRNA and tracrRNA of type II CRISPR loci if present in the organism. This is Ribonuclease 3 from Staphylococcus aureus (strain USA300).